The primary structure comprises 714 residues: NCK-interacting protein with SH3 domain (714 aa).

The SH3 domain occupies 1 to 58; that stretch reads MYRALYAFRSAEPNAMAFAAGETFLVLERSSTHWWLAARARSGETGYVPPAYLHRLQG. 2 disordered regions span residues 103–126 and 139–298; these read TLSRRGTSASSATVMTPSTSDHHL and RTGF…AAET. Residues 106–121 show a composition bias toward polar residues; it reads RRGTSASSATVMTPST. Serine 120 is subject to Phosphoserine. Positions 168 to 185 match the Nuclear localization signal motif; sequence RRAAPTTPPPPVKRRDRE. At threonine 174 the chain carries Phosphothreonine. Residues 200–215 are compositionally biased toward low complexity; it reads SGGSSVSSGSSASSTS. Polar residues predominate over residues 216 to 226; that stretch reads MDTLYTGSSPS. Residues 252 to 263 are compositionally biased toward pro residues; sequence QPSPSKAPSPEP. Serine 260, serine 286, and serine 673 each carry phosphoserine.

Associates with the intermediate filaments, vimentin and desmin. Binds the first and third SH3 domains of NCK. Binds the proline-rich domains of N-WASP through its SH3 domain. Similarly, binds diaphanous protein homolog 1 (DRF1). Binds the SH3 domains of GRB2 through its proline-rich domains. Interacts with FASLG.

It is found in the nucleus. Its function is as follows. Has an important role in stress fiber formation induced by active diaphanous protein homolog 1 (DRF1). Induces microspike formation, in vivo. In vitro, stimulates N-WASP-induced ARP2/3 complex activation in the absence of CDC42. May play an important role in the maintenance of sarcomere and/or in the assembly of myofibrils into sarcomeres. Implicated in regulation of actin polymerization and cell adhesion. In Mus musculus (Mouse), this protein is NCK-interacting protein with SH3 domain (Nckipsd).